A 33-amino-acid polypeptide reads, in one-letter code: Protamine-1B (33 aa).

Positions 1-33 (PRRRRRRSSSRPIRRRRPRRVSRRRRRGGRRRR) are disordered.

Testis.

Its subcellular location is the nucleus. The protein localises to the chromosome. Its function is as follows. Protamines substitute for histones in the chromatin of sperm during the haploid phase of spermatogenesis. They compact sperm DNA into a highly condensed, stable and inactive complex. The polypeptide is Protamine-1B (Oncorhynchus mykiss (Rainbow trout)).